The following is a 245-amino-acid chain: 4-hydroxy-tetrahydrodipicolinate reductase (245 aa).

NAD(+)-binding positions include Gly8–Met13, Gly78–Thr80, and Ser102–Met105. Residue His134 is the Proton donor/acceptor of the active site. Residue His135 coordinates (S)-2,3,4,5-tetrahydrodipicolinate. Catalysis depends on Lys138, which acts as the Proton donor. Position 144-145 (Gly144–Thr145) interacts with (S)-2,3,4,5-tetrahydrodipicolinate.

This sequence belongs to the DapB family.

It is found in the cytoplasm. It catalyses the reaction (S)-2,3,4,5-tetrahydrodipicolinate + NAD(+) + H2O = (2S,4S)-4-hydroxy-2,3,4,5-tetrahydrodipicolinate + NADH + H(+). The enzyme catalyses (S)-2,3,4,5-tetrahydrodipicolinate + NADP(+) + H2O = (2S,4S)-4-hydroxy-2,3,4,5-tetrahydrodipicolinate + NADPH + H(+). It participates in amino-acid biosynthesis; L-lysine biosynthesis via DAP pathway; (S)-tetrahydrodipicolinate from L-aspartate: step 4/4. Catalyzes the conversion of 4-hydroxy-tetrahydrodipicolinate (HTPA) to tetrahydrodipicolinate. The polypeptide is 4-hydroxy-tetrahydrodipicolinate reductase (Rickettsia akari (strain Hartford)).